Reading from the N-terminus, the 349-residue chain is tRNA pseudouridine synthase D (349 aa).

Phe27 is a substrate binding site. Asp80 serves as the catalytic Nucleophile. A substrate-binding site is contributed by Asn129. The TRUD domain maps to 155-303; it reads GVPNYFGAQR…VEAARRAMLL (149 aa). Phe329 contacts substrate.

This sequence belongs to the pseudouridine synthase TruD family.

The catalysed reaction is uridine(13) in tRNA = pseudouridine(13) in tRNA. Functionally, responsible for synthesis of pseudouridine from uracil-13 in transfer RNAs. In Escherichia coli O81 (strain ED1a), this protein is tRNA pseudouridine synthase D.